Consider the following 345-residue polypeptide: S-adenosylmethionine:tRNA ribosyltransferase-isomerase (345 aa).

This sequence belongs to the QueA family. As to quaternary structure, monomer.

The protein resides in the cytoplasm. It carries out the reaction 7-aminomethyl-7-carbaguanosine(34) in tRNA + S-adenosyl-L-methionine = epoxyqueuosine(34) in tRNA + adenine + L-methionine + 2 H(+). It functions in the pathway tRNA modification; tRNA-queuosine biosynthesis. Functionally, transfers and isomerizes the ribose moiety from AdoMet to the 7-aminomethyl group of 7-deazaguanine (preQ1-tRNA) to give epoxyqueuosine (oQ-tRNA). The chain is S-adenosylmethionine:tRNA ribosyltransferase-isomerase from Helicobacter pylori (strain ATCC 700392 / 26695) (Campylobacter pylori).